Consider the following 210-residue polypeptide: Probable high-affinity nitrate transporter-activating protein 2.2 (210 aa).

An N-terminal signal peptide occupies residues 1-23 (MARFGAVIHRVFLPLLLLLVVLG). The helical transmembrane segment at 182-202 (IEVAAGVLSAFSVAALAVFLV) threads the bilayer.

This sequence belongs to the NAR2 family.

It localises to the cell membrane. Its function is as follows. Involved in nitrate transport. The protein is Probable high-affinity nitrate transporter-activating protein 2.2 (NAR2.2) of Oryza sativa subsp. japonica (Rice).